The primary structure comprises 416 residues: L-cysteine:1D-myo-inositol 2-amino-2-deoxy-alpha-D-glucopyranoside ligase (416 aa).

Residue Cys-45 participates in Zn(2+) binding. L-cysteinyl-5'-AMP is bound by residues 45 to 48, Thr-60, and 83 to 85; these read CGIT and NVT. The 'HIGH' region signature appears at 47–57; that stretch reads ITPYDSTHLGH. The 'ERGGDP' region signature appears at 191–196; sequence ERGGDP. L-cysteinyl-5'-AMP is bound at residue Trp-232. Cys-236 contributes to the Zn(2+) binding site. 254-256 is a binding site for L-cysteinyl-5'-AMP; that stretch reads GSD. A Zn(2+)-binding site is contributed by His-261. Val-286 lines the L-cysteinyl-5'-AMP pocket. A 'KMSKS' region motif is present at residues 292-296; it reads KMSKS.

Belongs to the class-I aminoacyl-tRNA synthetase family. MshC subfamily. As to quaternary structure, monomer. Zn(2+) serves as cofactor.

It catalyses the reaction 1D-myo-inositol 2-amino-2-deoxy-alpha-D-glucopyranoside + L-cysteine + ATP = 1D-myo-inositol 2-(L-cysteinylamino)-2-deoxy-alpha-D-glucopyranoside + AMP + diphosphate + H(+). Functionally, catalyzes the ATP-dependent condensation of GlcN-Ins and L-cysteine to form L-Cys-GlcN-Ins. In Brachybacterium faecium (strain ATCC 43885 / DSM 4810 / JCM 11609 / LMG 19847 / NBRC 14762 / NCIMB 9860 / 6-10), this protein is L-cysteine:1D-myo-inositol 2-amino-2-deoxy-alpha-D-glucopyranoside ligase.